A 78-amino-acid polypeptide reads, in one-letter code: Hainantoxin-XX.3 (78 aa).

Residues 1 to 23 (MKSATLLALSFLLIASCFLICEA) form the signal peptide. The propeptide occupies 24–47 (EHSRYEEHEILEENMGDVVNLEQR). Disulfide bonds link C49–C62, C56–C66, and C61–C77.

The protein belongs to the hainantoxin family. 20 subfamily. Expressed by the venom gland.

Its subcellular location is the secreted. Functionally, putative ion channel inhibitor. In Cyriopagopus hainanus (Chinese bird spider), this protein is Hainantoxin-XX.3.